The chain runs to 89 residues: Neurotoxin LmNaTx28 (89 aa).

An N-terminal signal peptide occupies residues 1-18 (MNLPTVLCIIALILGVRS). Residues 20 to 85 (KNGFFTKLGK…VADSSEKACQ (66 aa)) form the LCN-type CS-alpha/beta domain. Cystine bridges form between cysteine 33-cysteine 57, cysteine 43-cysteine 62, cysteine 47-cysteine 64, and cysteine 58-cysteine 84.

Belongs to the long (4 C-C) scorpion toxin superfamily. Sodium channel inhibitor family. Beta subfamily. In terms of tissue distribution, expressed by the venom gland.

It localises to the secreted. Its function is as follows. Binds voltage-independently at site-4 of sodium channels (Nav) and shift the voltage of activation toward more negative potentials thereby affecting sodium channel activation and promoting spontaneous and repetitive firing. This Lychas mucronatus (Chinese swimming scorpion) protein is Neurotoxin LmNaTx28.